Here is a 435-residue protein sequence, read N- to C-terminus: Nicotinate phosphoribosyltransferase (435 aa).

Residue H230 is modified to Phosphohistidine; by autocatalysis.

It belongs to the NAPRTase family. Transiently phosphorylated on a His residue during the reaction cycle. Phosphorylation strongly increases the affinity for substrates and increases the rate of nicotinate D-ribonucleotide production. Dephosphorylation regenerates the low-affinity form of the enzyme, leading to product release.

It carries out the reaction nicotinate + 5-phospho-alpha-D-ribose 1-diphosphate + ATP + H2O = nicotinate beta-D-ribonucleotide + ADP + phosphate + diphosphate. It functions in the pathway cofactor biosynthesis; NAD(+) biosynthesis; nicotinate D-ribonucleotide from nicotinate: step 1/1. Functionally, catalyzes the synthesis of beta-nicotinate D-ribonucleotide from nicotinate and 5-phospho-D-ribose 1-phosphate at the expense of ATP. The protein is Nicotinate phosphoribosyltransferase of Vibrio cholerae serotype O1 (strain ATCC 39541 / Classical Ogawa 395 / O395).